A 308-amino-acid polypeptide reads, in one-letter code: Oxygen-dependent coproporphyrinogen-III oxidase (308 aa).

Substrate is bound at residue serine 100. A divalent metal cation contacts are provided by histidine 104 and histidine 114. Histidine 114 serves as the catalytic Proton donor. 116–118 (NFR) provides a ligand contact to substrate. A divalent metal cation is bound by residues histidine 153 and histidine 183. An important for dimerization region spans residues 248-283 (YVEFNLVFDRGTIFGLQSGGRTESILSSMPPMATWK). 266-268 (GGR) lines the substrate pocket.

This sequence belongs to the aerobic coproporphyrinogen-III oxidase family. In terms of assembly, homodimer. It depends on a divalent metal cation as a cofactor.

The protein resides in the cytoplasm. It catalyses the reaction coproporphyrinogen III + O2 + 2 H(+) = protoporphyrinogen IX + 2 CO2 + 2 H2O. It functions in the pathway porphyrin-containing compound metabolism; protoporphyrin-IX biosynthesis; protoporphyrinogen-IX from coproporphyrinogen-III (O2 route): step 1/1. Functionally, involved in the heme biosynthesis. Catalyzes the aerobic oxidative decarboxylation of propionate groups of rings A and B of coproporphyrinogen-III to yield the vinyl groups in protoporphyrinogen-IX. The polypeptide is Oxygen-dependent coproporphyrinogen-III oxidase (Francisella tularensis subsp. holarctica (strain LVS)).